Consider the following 140-residue polypeptide: Large ribosomal subunit protein uL16 (140 aa).

It belongs to the universal ribosomal protein uL16 family. In terms of assembly, part of the 50S ribosomal subunit.

Binds 23S rRNA and is also seen to make contacts with the A and possibly P site tRNAs. This is Large ribosomal subunit protein uL16 from Amoebophilus asiaticus (strain 5a2).